A 466-amino-acid polypeptide reads, in one-letter code: Asparagine--tRNA ligase (466 aa).

This sequence belongs to the class-II aminoacyl-tRNA synthetase family. In terms of assembly, homodimer.

Its subcellular location is the cytoplasm. The enzyme catalyses tRNA(Asn) + L-asparagine + ATP = L-asparaginyl-tRNA(Asn) + AMP + diphosphate + H(+). In Shewanella denitrificans (strain OS217 / ATCC BAA-1090 / DSM 15013), this protein is Asparagine--tRNA ligase.